Here is a 75-residue protein sequence, read N- to C-terminus: Acyl carrier protein (75 aa).

Residues 1-74 (MLDKVKEIIV…DVINYIEANK (74 aa)) enclose the Carrier domain. Position 34 is an O-(pantetheine 4'-phosphoryl)serine (S34).

This sequence belongs to the acyl carrier protein (ACP) family. Post-translationally, 4'-phosphopantetheine is transferred from CoA to a specific serine of apo-ACP by AcpS. This modification is essential for activity because fatty acids are bound in thioester linkage to the sulfhydryl of the prosthetic group.

The protein localises to the cytoplasm. It functions in the pathway lipid metabolism; fatty acid biosynthesis. Carrier of the growing fatty acid chain in fatty acid biosynthesis. The protein is Acyl carrier protein of Fusobacterium nucleatum subsp. nucleatum (strain ATCC 25586 / DSM 15643 / BCRC 10681 / CIP 101130 / JCM 8532 / KCTC 2640 / LMG 13131 / VPI 4355).